The following is a 402-amino-acid chain: Iripin-8 (402 aa).

Residues 1–16 (MTRLLWLFAAITASLA) form the signal peptide. Residues Asn164 and Asn230 are each glycosylated (N-linked (GlcNAc...) asparagine).

This sequence belongs to the serpin family. As to quaternary structure, interacts with host thrombin/F2. Interacts with host coagulation factor VII/F7 (activated). Interacts with host coagulation factor X/F10 (activated). Interacts with host coagulation factor XII/F12 (activated). Interacts with host coagulation factor IX/F9 (activated). Interacts with host plasmin/PLG. Interacts with host protein C/PROC (activated). As to expression, saliva (at protein level). Salivary gland. Midgut. Low-level expression in ovary.

It localises to the secreted. Functionally, serine protease inhibitor that modulates blood feeding of ticks on vertebrate species. Inhibits the intrinsic and common pathways of blood coagulation in the host. Inhibits host thrombin, factor VIIa, factor Xa, factor XIa, factor XIIa, plasmin and activated protein C. Inhibits host trypsin and kallikrein. Reduces host complement activity. Does not affect proliferation of CD4+ T-cells and neutrophil migration. The chain is Iripin-8 from Ixodes ricinus (Common tick).